The chain runs to 115 residues: Large ribosomal subunit protein bL20 (115 aa).

This sequence belongs to the bacterial ribosomal protein bL20 family.

Binds directly to 23S ribosomal RNA and is necessary for the in vitro assembly process of the 50S ribosomal subunit. It is not involved in the protein synthesizing functions of that subunit. This chain is Large ribosomal subunit protein bL20, found in Myxococcus xanthus (strain DK1622).